Reading from the N-terminus, the 220-residue chain is Lipoprotein-releasing system ATP-binding protein LolD (220 aa).

Positions 1-220 (MRAVDIHKSY…YRMKDGQWQS (220 aa)) constitute an ABC transporter domain. Residue 37–44 (GASGAGKS) coordinates ATP.

Belongs to the ABC transporter superfamily. Lipoprotein translocase (TC 3.A.1.125) family. In terms of assembly, the complex is composed of two ATP-binding proteins (LolD) and two transmembrane proteins (LolC and LolE).

It localises to the cell inner membrane. Part of the ABC transporter complex LolCDE involved in the translocation of mature outer membrane-directed lipoproteins, from the inner membrane to the periplasmic chaperone, LolA. Responsible for the formation of the LolA-lipoprotein complex in an ATP-dependent manner. The polypeptide is Lipoprotein-releasing system ATP-binding protein LolD (Bdellovibrio bacteriovorus (strain ATCC 15356 / DSM 50701 / NCIMB 9529 / HD100)).